The sequence spans 276 residues: Ribosomal RNA small subunit methyltransferase A (276 aa).

The S-adenosyl-L-methionine site is built by asparagine 27, leucine 29, glycine 54, glutamate 75, aspartate 101, and asparagine 122.

Belongs to the class I-like SAM-binding methyltransferase superfamily. rRNA adenine N(6)-methyltransferase family. RsmA subfamily.

The protein resides in the cytoplasm. It carries out the reaction adenosine(1518)/adenosine(1519) in 16S rRNA + 4 S-adenosyl-L-methionine = N(6)-dimethyladenosine(1518)/N(6)-dimethyladenosine(1519) in 16S rRNA + 4 S-adenosyl-L-homocysteine + 4 H(+). Its function is as follows. Specifically dimethylates two adjacent adenosines (A1518 and A1519) in the loop of a conserved hairpin near the 3'-end of 16S rRNA in the 30S particle. May play a critical role in biogenesis of 30S subunits. This Brucella melitensis biotype 1 (strain ATCC 23456 / CCUG 17765 / NCTC 10094 / 16M) protein is Ribosomal RNA small subunit methyltransferase A.